A 255-amino-acid chain; its full sequence is Folate receptor beta (255 aa).

Residues 1-16 (MVWKWMPLLLLLVCVA) form the signal peptide. 8 cysteine pairs are disulfide-bonded: Cys31/Cys59, Cys51/Cys99, Cys60/Cys103, Cys83/Cys169, Cys90/Cys140, Cys129/Cys203, Cys133/Cys183, and Cys146/Cys163. Folate is bound by residues Asp97 and Tyr101. A glycan (N-linked (GlcNAc...) asparagine) is linked at Asn115. Folate-binding positions include 118-122 (WRKER), 151-156 (HRGWDW), and Ser190. An N-linked (GlcNAc...) asparagine glycan is attached at Asn195. A lipid anchor (GPI-anchor amidated asparagine) is attached at Asn230. The propeptide at 231 to 255 (AGEMLHGTGGLLLSLALMLQLWLLG) is removed in mature form.

It belongs to the folate receptor family. N-glycosylated. Expressed in placenta and hematopoietic cells. Expression is increased in malignant tissues.

Its subcellular location is the cell membrane. It localises to the secreted. Its function is as follows. Binds to folate and reduced folic acid derivatives and mediates delivery of 5-methyltetrahydrofolate and folate analogs into the interior of cells. Has high affinity for folate and folic acid analogs at neutral pH. Exposure to slightly acidic pH after receptor endocytosis triggers a conformation change that strongly reduces its affinity for folates and mediates their release. This chain is Folate receptor beta (FOLR2), found in Homo sapiens (Human).